The primary structure comprises 61 residues: Beta-insect depressant toxin BmKIT2 (61 aa).

The LCN-type CS-alpha/beta domain maps to 1-61 (DGYIKGKSGC…TWKSESNTCG (61 aa)). 4 cysteine pairs are disulfide-bonded: Cys-10-Cys-60, Cys-14-Cys-35, Cys-21-Cys-42, and Cys-25-Cys-44. The residue at position 61 (Gly-61) is a Glycine amide.

The protein belongs to the long (4 C-C) scorpion toxin superfamily. Sodium channel inhibitor family. Beta subfamily. Expressed by the venom gland.

It localises to the secreted. On insects, this depressant beta-toxins cause a transient contraction paralysis followed by a slow flaccid paralysis. They bind voltage-independently at site-4 of sodium channels (Nav) and shift the voltage of activation toward more negative potentials thereby affecting sodium channel activation and promoting spontaneous and repetitive firing. This toxin is active against insects and mammals. It is capable of binding to not only cockroach neuronal membranes, but also rat cerebrocortical and hippocampal synaptosomes. This toxin also has potent peripheral and central suppressive effects on rat nociceptive spontaneous responses, thermal hyperalgesia and spinal c-Fos expression induced by formalin and carrageenan, which may be derived from its modulation on the activity of sodium channels of the neurons. Administration of BmKIT2 into rat brain can also suppress the epileptic seizures significantly. The sequence is that of Beta-insect depressant toxin BmKIT2 from Olivierus martensii (Manchurian scorpion).